A 117-amino-acid chain; its full sequence is Large ribosomal subunit protein bL20 (117 aa).

Belongs to the bacterial ribosomal protein bL20 family.

Functionally, binds directly to 23S ribosomal RNA and is necessary for the in vitro assembly process of the 50S ribosomal subunit. It is not involved in the protein synthesizing functions of that subunit. This chain is Large ribosomal subunit protein bL20, found in Rippkaea orientalis (strain PCC 8801 / RF-1) (Cyanothece sp. (strain PCC 8801)).